The following is a 270-amino-acid chain: Probable aquaporin NIP-type (270 aa).

Helical transmembrane passes span Leu45–Val65 and Val72–Val92. An NPA 1 motif is present at residues Asn101–Ala103. Helical transmembrane passes span Leu121–Phe141, Ser160–Thr180, and Val188–Ser208. Positions Asn213–Ala215 match the NPA 2 motif. The chain crosses the membrane as a helical span at residues Trp231–Ile251.

It belongs to the MIP/aquaporin (TC 1.A.8) family. NIP (TC 1.A.8.12) subfamily. Pollen specific.

The protein resides in the membrane. Its function is as follows. Aquaporins facilitate the transport of water and small neutral solutes across cell membranes. The polypeptide is Probable aquaporin NIP-type (Nicotiana alata (Winged tobacco)).